We begin with the raw amino-acid sequence, 863 residues long: DNA gyrase subunit A (863 aa).

In terms of domain architecture, Topo IIA-type catalytic spans 37–500 (LPDARDGLKP…DYDDIDIEDL (464 aa)). Tyr125 functions as the O-(5'-phospho-DNA)-tyrosine intermediate in the catalytic mechanism. A GyrA-box motif is present at residues 527–533 (QKRGGKG).

The protein belongs to the type II topoisomerase GyrA/ParC subunit family. Heterotetramer, composed of two GyrA and two GyrB chains. In the heterotetramer, GyrA contains the active site tyrosine that forms a transient covalent intermediate with DNA, while GyrB binds cofactors and catalyzes ATP hydrolysis.

It is found in the cytoplasm. The enzyme catalyses ATP-dependent breakage, passage and rejoining of double-stranded DNA.. A type II topoisomerase that negatively supercoils closed circular double-stranded (ds) DNA in an ATP-dependent manner to modulate DNA topology and maintain chromosomes in an underwound state. Negative supercoiling favors strand separation, and DNA replication, transcription, recombination and repair, all of which involve strand separation. Also able to catalyze the interconversion of other topological isomers of dsDNA rings, including catenanes and knotted rings. Type II topoisomerases break and join 2 DNA strands simultaneously in an ATP-dependent manner. In Campylobacter jejuni subsp. jejuni serotype O:2 (strain ATCC 700819 / NCTC 11168), this protein is DNA gyrase subunit A.